We begin with the raw amino-acid sequence, 502 residues long: Glycerol kinase (502 aa).

T14 lines the ADP pocket. T14, T15, and S16 together coordinate ATP. T14 lines the sn-glycerol 3-phosphate pocket. An ADP-binding site is contributed by R18. Positions 84, 85, and 136 each coordinate sn-glycerol 3-phosphate. Glycerol is bound by residues R84, E85, and Y136. A Phosphohistidine; by HPr modification is found at H232. Residue D246 coordinates sn-glycerol 3-phosphate. Positions 246 and 247 each coordinate glycerol. Residues T268 and G311 each contribute to the ADP site. ATP contacts are provided by T268, G311, Q315, and G412. ADP is bound by residues G412 and N416.

It belongs to the FGGY kinase family. In terms of assembly, homotetramer and homodimer (in equilibrium). The phosphoenolpyruvate-dependent sugar phosphotransferase system (PTS), including enzyme I, and histidine-containing protein (HPr) are required for the phosphorylation, which leads to the activation of the enzyme.

The enzyme catalyses glycerol + ATP = sn-glycerol 3-phosphate + ADP + H(+). It participates in polyol metabolism; glycerol degradation via glycerol kinase pathway; sn-glycerol 3-phosphate from glycerol: step 1/1. Its activity is regulated as follows. Activated by phosphorylation and inhibited by fructose 1,6-bisphosphate (FBP). Key enzyme in the regulation of glycerol uptake and metabolism. Catalyzes the phosphorylation of glycerol to yield sn-glycerol 3-phosphate. The polypeptide is Glycerol kinase (Streptococcus pneumoniae (strain 70585)).